A 931-amino-acid polypeptide reads, in one-letter code: Phosphoenolpyruvate carboxylase (931 aa).

Catalysis depends on residues histidine 158 and lysine 593.

It belongs to the PEPCase type 1 family. Requires Mg(2+) as cofactor.

The catalysed reaction is oxaloacetate + phosphate = phosphoenolpyruvate + hydrogencarbonate. Forms oxaloacetate, a four-carbon dicarboxylic acid source for the tricarboxylic acid cycle. The protein is Phosphoenolpyruvate carboxylase of Azorhizobium caulinodans (strain ATCC 43989 / DSM 5975 / JCM 20966 / LMG 6465 / NBRC 14845 / NCIMB 13405 / ORS 571).